The sequence spans 121 residues: Protein p14.5 (121 aa).

Ala-2 is subject to N-acetylalanine; by host. The interval 84–121 is disordered; that stretch reads SLVPDEADNKPEDDEESGGAKPKKKKHLFPKLSSHKSK. Positions 104-121 are enriched in basic residues; that stretch reads KPKKKKHLFPKLSSHKSK.

It belongs to the asfivirus structural protein p14.5 family. In terms of assembly, interacts with the major capsid protein. Interacts with host IRF3; this interaction interferes with the recruitment of IRF3 to TBK1. Acetylated.

It localises to the virion. Its function is as follows. Structural protein required for transport of intracellular particles from the assembly sites to the plasma membrane. Binds to both ssDNA and dsDNA. Suppressed the activation of the cGAS/STING pathway by interfering with the recruitment of IRF3 to TBK1, which in turn suppresses IRF3 phosphorylation, decreasing interferon production. The protein is Protein p14.5 of African swine fever virus (isolate Pig/Kenya/KEN-50/1950) (ASFV).